A 592-amino-acid polypeptide reads, in one-letter code: Arginine--tRNA ligase (592 aa).

Residues 123–133 (PNTNKPLHLGH) carry the 'HIGH' region motif.

The protein belongs to the class-I aminoacyl-tRNA synthetase family. In terms of assembly, monomer.

The protein resides in the cytoplasm. It carries out the reaction tRNA(Arg) + L-arginine + ATP = L-arginyl-tRNA(Arg) + AMP + diphosphate. The chain is Arginine--tRNA ligase from Flavobacterium johnsoniae (strain ATCC 17061 / DSM 2064 / JCM 8514 / BCRC 14874 / CCUG 350202 / NBRC 14942 / NCIMB 11054 / UW101) (Cytophaga johnsonae).